The chain runs to 251 residues: 5'-nucleotidase SurE (251 aa).

Asp-8, Asp-9, Ser-39, and Asn-91 together coordinate a divalent metal cation.

It belongs to the SurE nucleotidase family. A divalent metal cation serves as cofactor.

It localises to the cytoplasm. It catalyses the reaction a ribonucleoside 5'-phosphate + H2O = a ribonucleoside + phosphate. In terms of biological role, nucleotidase that shows phosphatase activity on nucleoside 5'-monophosphates. The chain is 5'-nucleotidase SurE from Thioalkalivibrio sulfidiphilus (strain HL-EbGR7).